The chain runs to 175 residues: MRCEVPLPLLGLLLCVVGAAAQGGQEEFAVEISGTTVTITCPSSGDDVKWKPDPKMVVNNKYIIQNHDSSPLTVSCTAGDEEHTMYLNAKVCANCEELDTFTVVGIIAADLLITLGVLILVYYFSKNKKGQSRAAAGSRPRAQKMRRPPPVPNPDYEPIRKGQRDVYAGLEHRGF.

Positions 1–21 (MRCEVPLPLLGLLLCVVGAAA) are cleaved as a signal peptide. Topologically, residues 22 to 100 (QGGQEEFAVE…VCANCEELDT (79 aa)) are extracellular. The chain crosses the membrane as a helical span at residues 101–121 (FTVVGIIAADLLITLGVLILV). The Cytoplasmic portion of the chain corresponds to 122-175 (YYFSKNKKGQSRAAAGSRPRAQKMRRPPPVPNPDYEPIRKGQRDVYAGLEHRGF). The interval 133-163 (RAAAGSRPRAQKMRRPPPVPNPDYEPIRKGQ) is disordered. One can recognise an ITAM domain in the interval 146 to 173 (RRPPPVPNPDYEPIRKGQRDVYAGLEHR).

As to quaternary structure, the TCR/CD3 complex of T-lymphocytes consists of either a TCR alpha/beta or TCR gamma/delta heterodimer coexpressed at the cell surface with the invariant subunits of CD3 labeled gamma, delta, epsilon, zeta, and eta.

The protein localises to the cell membrane. Functionally, the CD3 complex mediates signal transduction, resulting in T-cell activation and proliferation. Required for normal immune responses. The protein is T-cell surface glycoprotein CD3 epsilon chain (CD3E) of Gallus gallus (Chicken).